The primary structure comprises 388 residues: Alanine racemase 2 (388 aa).

Lys39 serves as the catalytic Proton acceptor; specific for D-alanine. An N6-(pyridoxal phosphate)lysine modification is found at Lys39. Substrate is bound at residue Arg137. Tyr267 (proton acceptor; specific for L-alanine) is an active-site residue. Met315 serves as a coordination point for substrate.

This sequence belongs to the alanine racemase family. Pyridoxal 5'-phosphate serves as cofactor.

It catalyses the reaction L-alanine = D-alanine. It functions in the pathway amino-acid biosynthesis; D-alanine biosynthesis; D-alanine from L-alanine: step 1/1. Catalyzes the interconversion of L-alanine and D-alanine. May also act on other amino acids. The protein is Alanine racemase 2 (alr2) of Caldanaerobacter subterraneus subsp. tengcongensis (strain DSM 15242 / JCM 11007 / NBRC 100824 / MB4) (Thermoanaerobacter tengcongensis).